We begin with the raw amino-acid sequence, 714 residues long: Fatty acid oxidation complex subunit alpha (714 aa).

The interval M1–P190 is enoyl-CoA hydratase. Residues A306–Q714 form a 3-hydroxyacyl-CoA dehydrogenase region.

The protein in the N-terminal section; belongs to the enoyl-CoA hydratase/isomerase family. This sequence in the central section; belongs to the 3-hydroxyacyl-CoA dehydrogenase family. Heterotetramer of two alpha chains (FadJ) and two beta chains (FadI).

The protein localises to the cytoplasm. It carries out the reaction a (3S)-3-hydroxyacyl-CoA = a (2E)-enoyl-CoA + H2O. The catalysed reaction is a 4-saturated-(3S)-3-hydroxyacyl-CoA = a (3E)-enoyl-CoA + H2O. It catalyses the reaction a (3S)-3-hydroxyacyl-CoA + NAD(+) = a 3-oxoacyl-CoA + NADH + H(+). The enzyme catalyses (3S)-3-hydroxybutanoyl-CoA = (3R)-3-hydroxybutanoyl-CoA. It participates in lipid metabolism; fatty acid beta-oxidation. Catalyzes the formation of a hydroxyacyl-CoA by addition of water on enoyl-CoA. Also exhibits 3-hydroxyacyl-CoA epimerase and 3-hydroxyacyl-CoA dehydrogenase activities. The polypeptide is Fatty acid oxidation complex subunit alpha (Escherichia coli O127:H6 (strain E2348/69 / EPEC)).